The sequence spans 531 residues: Tyrosine/DOPA decarboxylase 2 (531 aa).

Lys319 is subject to N6-(pyridoxal phosphate)lysine.

This sequence belongs to the group II decarboxylase family. As to quaternary structure, homodimer. Pyridoxal 5'-phosphate is required as a cofactor. As to expression, predominantly expressed in the roots and stems, while a lower level expression is seen in the sepals and carpels of fully expanded flowers.

It carries out the reaction L-tyrosine + H(+) = tyramine + CO2. It catalyses the reaction L-dopa + H(+) = dopamine + CO2. The enzyme catalyses 5-hydroxy-L-tryptophan + H(+) = serotonin + CO2. In terms of biological role, marginally higher substrate specificity for L-DOPA over L-tyrosine. This chain is Tyrosine/DOPA decarboxylase 2 (TYDC2), found in Papaver somniferum (Opium poppy).